The following is a 297-amino-acid chain: Haloalkane dehalogenase (297 aa).

An AB hydrolase-1 domain is found at 47 to 148 (PPIVLLHGEP…AIARLVVANG (102 aa)). Asp-123 acts as the Nucleophile in catalysis. The active-site Proton donor is Asp-250. His-279 functions as the Proton acceptor in the catalytic mechanism.

Belongs to the haloalkane dehalogenase family. Type 1 subfamily. In terms of assembly, monomer.

The enzyme catalyses 1-haloalkane + H2O = a halide anion + a primary alcohol + H(+). Functionally, catalyzes hydrolytic cleavage of carbon-halogen bonds in halogenated aliphatic compounds, leading to the formation of the corresponding primary alcohols, halide ions and protons. The sequence is that of Haloalkane dehalogenase from Mycobacterium marinum (strain ATCC BAA-535 / M).